The primary structure comprises 115 residues: Probable K(+)/H(+) antiporter subunit C (115 aa).

The next 3 helical transmembrane spans lie at 4-21 (ILSA…YLLL), 28-47 (VIIG…FGMG), and 75-97 (ALVL…VLLA).

This sequence belongs to the CPA3 antiporters (TC 2.A.63) subunit C family. May form a hetero-oligomeric complex that consists of six subunits: PhaAB, PhaC, PhaD, PhaE, PhaF and PhaG.

Its subcellular location is the cell membrane. Part of a K(+) efflux system which is required for the adaptation of R.meliloti to alkaline pH as well as for the infection process during symbiotic nodule development. This chain is Probable K(+)/H(+) antiporter subunit C (phaC), found in Rhizobium meliloti (strain 1021) (Ensifer meliloti).